A 247-amino-acid chain; its full sequence is MDTRKNLKELIKSSSNIVFFGGAGVSTESNIPDFRSEEGLYKTKSNFSYSPEVMLSHSFFKEHTEDFFDFYKEKMIYKYAKPNLAHHALAKLEKVGKLKAIITQNIDGLHQLAGSKNVIELHGGVGRNYCMDCNKFFDLNYILNNKEVVPKCDVCGGIVKPDVVLYEEPLNMDNINNAVRYVENSDVLIVGGTSLVVYPAANLIHYYKGNKLVLINKSSTPYDRKAQIVINDSIGSILGGIVEELGY.

Residues 1–247 (MDTRKNLKEL…LGGIVEELGY (247 aa)) form the Deacetylase sirtuin-type domain. NAD(+)-binding residues include Ala23, Thr27, Phe34, Arg35, Gln104, Ile106, Asp107, and His122. Position 34 (Phe34) interacts with nicotinamide. Nicotinamide contacts are provided by Ile106 and Asp107. Residue His122 is the Proton acceptor of the active site. Zn(2+)-binding residues include Cys130, Cys133, Cys152, and Cys155. Positions 193, 194, 216, and 234 each coordinate NAD(+).

Belongs to the sirtuin family. Class U subfamily. The cofactor is Zn(2+).

It localises to the cytoplasm. It catalyses the reaction N(6)-acetyl-L-lysyl-[protein] + NAD(+) + H2O = 2''-O-acetyl-ADP-D-ribose + nicotinamide + L-lysyl-[protein]. NAD-dependent protein deacetylase which modulates the activities of several enzymes which are inactive in their acetylated form. The protein is NAD-dependent protein deacetylase of Clostridium tetani (strain Massachusetts / E88).